A 550-amino-acid polypeptide reads, in one-letter code: Silent protein UshA(0) (550 aa).

The first 25 residues, 1 to 25 (MKFLKRGVALALLAAFALTTQPAQA), serve as a signal peptide directing secretion. Asp-41, His-43, Asp-84, Asn-116, His-217, His-252, and Gln-254 together coordinate a divalent metal cation. Residues Cys-258 and Cys-275 are joined by a disulfide bond. Substrate contacts are provided by residues Phe-429 and 498 to 504 (FNATGGD).

This sequence belongs to the 5'-nucleotidase family. The cofactor is a divalent metal cation.

The protein localises to the periplasm. The chain is Silent protein UshA(0) (ushA) from Salmonella typhimurium (strain LT2 / SGSC1412 / ATCC 700720).